The chain runs to 391 residues: Ribosomal RNA small subunit methyltransferase H (391 aa).

The segment at 1–23 (MDVDVQDDVQGRAGEGAEERAHD) is disordered. S-adenosyl-L-methionine is bound by residues 59 to 61 (GGH), Asp-78, Leu-112, Asp-126, and Gln-133. The tract at residues 284–391 (SSSSAPPDLP…EPGATVERTP (108 aa)) is disordered. Residues 368 to 380 (RTQEFETHPHLEP) show a composition bias toward basic and acidic residues.

Belongs to the methyltransferase superfamily. RsmH family.

Its subcellular location is the cytoplasm. The enzyme catalyses cytidine(1402) in 16S rRNA + S-adenosyl-L-methionine = N(4)-methylcytidine(1402) in 16S rRNA + S-adenosyl-L-homocysteine + H(+). Specifically methylates the N4 position of cytidine in position 1402 (C1402) of 16S rRNA. The chain is Ribosomal RNA small subunit methyltransferase H from Kineococcus radiotolerans (strain ATCC BAA-149 / DSM 14245 / SRS30216).